The primary structure comprises 506 residues: GTPase Der (506 aa).

EngA-type G domains lie at 3–166 (PVVA…GEQL) and 218–391 (IKIA…ACAT). Residues 9 to 16 (GRPNVGKS), 56 to 60 (DTGGI), 118 to 121 (NKTD), 224 to 231 (GRPNVGKS), 271 to 275 (DTAGV), and 336 to 339 (NKWD) contribute to the GTP site. Residues 392 to 476 (QKTSTSMLTR…PIRIQFQEGN (85 aa)) form the KH-like domain.

The protein belongs to the TRAFAC class TrmE-Era-EngA-EngB-Septin-like GTPase superfamily. EngA (Der) GTPase family. As to quaternary structure, associates with the 50S ribosomal subunit.

GTPase that plays an essential role in the late steps of ribosome biogenesis. This is GTPase Der from Actinobacillus pleuropneumoniae serotype 5b (strain L20).